Reading from the N-terminus, the 284-residue chain is Phosphatidylglycerol--prolipoprotein diacylglyceryl transferase (284 aa).

7 helical membrane passes run 14 to 34, 62 to 82, 106 to 126, 136 to 156, 190 to 210, 218 to 238, and 252 to 272; these read IAFSLGSIEVHWYGLAYACAI, YFLWAELGIVLGARVGYILIY, FVGIRGMSYHGGLVGFLIASY, LLIYLDLIAISLPLGYVFGRI, PSQLIEAFLEGVIVFLMVLWA, GLLIVVYGLGYSLMRFIAEFY, and LSMGQILSLLMVIVSLGILLY. Position 155 (Arg155) interacts with a 1,2-diacyl-sn-glycero-3-phospho-(1'-sn-glycerol).

The protein belongs to the Lgt family.

It localises to the cell inner membrane. The catalysed reaction is L-cysteinyl-[prolipoprotein] + a 1,2-diacyl-sn-glycero-3-phospho-(1'-sn-glycerol) = an S-1,2-diacyl-sn-glyceryl-L-cysteinyl-[prolipoprotein] + sn-glycerol 1-phosphate + H(+). It participates in protein modification; lipoprotein biosynthesis (diacylglyceryl transfer). Its function is as follows. Catalyzes the transfer of the diacylglyceryl group from phosphatidylglycerol to the sulfhydryl group of the N-terminal cysteine of a prolipoprotein, the first step in the formation of mature lipoproteins. The polypeptide is Phosphatidylglycerol--prolipoprotein diacylglyceryl transferase (Helicobacter pylori (strain Shi470)).